The primary structure comprises 594 residues: Phostensin (594 aa).

Basic and acidic residues-rich tracts occupy residues 18 to 33 and 109 to 125; these read EEAA…RDRL and VLGD…ERRS. Disordered regions lie at residues 18–238 and 294–485; these read EEAA…PTDV and VQDI…GKKR. Phosphoserine is present on residues Ser-126, Ser-134, Ser-174, and Ser-194. 2 stretches are compositionally biased toward basic and acidic residues: residues 133 to 155 and 167 to 190; these read QSPK…DRRL and SLRD…EAQK. A Phosphothreonine modification is found at Thr-198. Position 224 is a phosphoserine (Ser-224). A compositionally biased stretch (acidic residues) spans 353-364; that stretch reads EAEEEAEKEEAE. Residues 403 to 421 show a composition bias toward pro residues; that stretch reads PRPPTPAPLSPPPSAPTAP. Ser-412 is modified (phosphoserine). N6-acetyllysine is present on Lys-437. Ser-510 carries the phosphoserine modification. Residues 531 to 577 are disordered; that stretch reads YQYPSESSVLEDLGPEPETPIAPLATQPDEEEEEEEEEEELLLQPGL. The segment covering 558-571 has biased composition (acidic residues); the sequence is PDEEEEEEEEEEEL.

As to quaternary structure, interacts with Protein phosphatase 1 (PP1).

The protein localises to the cytoplasm. It localises to the cytoskeleton. Its function is as follows. May target protein phosphatase 1 to F-actin cytoskeleton. The polypeptide is Phostensin (Ppp1r18) (Mus musculus (Mouse)).